The following is a 378-amino-acid chain: Probable E3 ubiquitin-protein ligase LUL3 (378 aa).

Basic residues predominate over residues 1–21 (MGISLSKRRRDNNNNHHHPHH). The segment at 1-79 (MGISLSKRRR…PPSQISYRPY (79 aa)) is disordered. G2 carries the N-myristoyl glycine lipid modification. Composition is skewed to pro residues over residues 29–38 (DPPPQQPPPQ) and 55–72 (SLPP…PPPS). The tract at residues 164–283 (FVFDALFDGS…GSFKVKVMKQ (120 aa)) is DAR2 domain. The RING-type; atypical zinc-finger motif lies at 321 to 360 (CVICLTEPKDTAVMPCRHLCLCSDCAEELRFQTNKCPICR).

The protein belongs to the RING-type zinc finger family. LOG2 subfamily. In terms of processing, myristoylated (in vitro).

The enzyme catalyses S-ubiquitinyl-[E2 ubiquitin-conjugating enzyme]-L-cysteine + [acceptor protein]-L-lysine = [E2 ubiquitin-conjugating enzyme]-L-cysteine + N(6)-ubiquitinyl-[acceptor protein]-L-lysine.. Its pathway is protein modification; protein ubiquitination. Its function is as follows. Acts as an E3 ubiquitin-protein ligase, or as part of E3 complex, which accepts ubiquitin from specific E2 ubiquitin-conjugating enzymes and then transfers it to substrates (in vitro). The chain is Probable E3 ubiquitin-protein ligase LUL3 (LUL3) from Arabidopsis thaliana (Mouse-ear cress).